The sequence spans 427 residues: Transcription factor MYB98 (427 aa).

Positions 195–202 (TRKLSSSS) match the Nuclear localization signal 1 motif. HTH myb-type domains are found at residues 212–267 (KSTL…RPDI) and 268–318 (KKET…RRQF). DNA-binding regions (H-T-H motif) lie at residues 240-263 (WSHI…HNHL) and 291-314 (WAEI…NATK). The Nuclear localization signal 2 signature appears at 361–368 (NKKKDVVV).

Expressed at high levels in the synergid cells of the female gametophyte, and at lower levels in the endosperm of young seeds and the trichomes of young leaves and sepals.

It localises to the nucleus. Its function is as follows. Transcription factor that binds to the motif 5'-GTAACNT-3' in the promoter of target genes (e.g. DD11 and DD18) and promotes their expression within synergid cells (e.g. in the filiform apparatus) in ovules. Required for the formation of the filiform apparatus during synergid cell differentiation in the female gametophyte. Involved in pollen tube guidance to the micropyle. The polypeptide is Transcription factor MYB98 (Arabidopsis thaliana (Mouse-ear cress)).